The chain runs to 268 residues: 4-hydroxy-tetrahydrodipicolinate reductase (268 aa).

Residues 10–15, D36, 99–101, and 123–126 each bind NAD(+); these read GAGGRM, GTT, and APNM. H156 (proton donor/acceptor) is an active-site residue. Position 157 (H157) interacts with (S)-2,3,4,5-tetrahydrodipicolinate. K160 (proton donor) is an active-site residue. (S)-2,3,4,5-tetrahydrodipicolinate is bound at residue 166 to 167; that stretch reads GT.

This sequence belongs to the DapB family.

The protein resides in the cytoplasm. It carries out the reaction (S)-2,3,4,5-tetrahydrodipicolinate + NAD(+) + H2O = (2S,4S)-4-hydroxy-2,3,4,5-tetrahydrodipicolinate + NADH + H(+). The catalysed reaction is (S)-2,3,4,5-tetrahydrodipicolinate + NADP(+) + H2O = (2S,4S)-4-hydroxy-2,3,4,5-tetrahydrodipicolinate + NADPH + H(+). It functions in the pathway amino-acid biosynthesis; L-lysine biosynthesis via DAP pathway; (S)-tetrahydrodipicolinate from L-aspartate: step 4/4. Its function is as follows. Catalyzes the conversion of 4-hydroxy-tetrahydrodipicolinate (HTPA) to tetrahydrodipicolinate. The protein is 4-hydroxy-tetrahydrodipicolinate reductase of Dechloromonas aromatica (strain RCB).